Consider the following 481-residue polypeptide: MMSEVRVRFAPSPTGSLHIGGARTALFNWLFARHHGGKFILRVDDTDLERSTEESMRGILEGLQWLGIDWDEGPIYQSQRLDEYRKFANKLLEEGKAYYCFCTKEELEEMRKQAEREGRPFMYTGKCRNLTKEQIENYLKEGKKPVIRLKTPREGKTVVHDIIRGDVEFDNSTIDDFIIMKSDGMPTYNFATVVDDYQMGITHIIRAEEHLSNTPKQILIYEALGVPLPQFAHVSMVLAPDRTKLSKRHGATSVQEFRDQGYLPEAIVNYITLLGWAPLDGEEIFDVRKSIREFSLERVSKNPAVYDVQKLTWINGHYIRSYDLDKLTQAIIPFLQKKGLIGENYDYEYIKKIVSVVREREKTLVDIADAMTYYFKEVESYEEKGVQKYFTKEGVVDILKKAAETLKNLEPFNKFTAEEAYRKLVEELGISSSALFHPTRLAISGRTFGPGLFDIMEFLGKEKTVARIERAIKFIEENIKG.

The 'HIGH' region signature appears at proline 11–glycine 21. The 'KMSKS' region signature appears at lysine 244–arginine 248. Lysine 247 lines the ATP pocket.

Belongs to the class-I aminoacyl-tRNA synthetase family. Glutamate--tRNA ligase type 1 subfamily. In terms of assembly, monomer.

Its subcellular location is the cytoplasm. The enzyme catalyses tRNA(Glu) + L-glutamate + ATP = L-glutamyl-tRNA(Glu) + AMP + diphosphate. In terms of biological role, catalyzes the attachment of glutamate to tRNA(Glu) in a two-step reaction: glutamate is first activated by ATP to form Glu-AMP and then transferred to the acceptor end of tRNA(Glu). The protein is Glutamate--tRNA ligase 1 of Caldanaerobacter subterraneus subsp. tengcongensis (strain DSM 15242 / JCM 11007 / NBRC 100824 / MB4) (Thermoanaerobacter tengcongensis).